The sequence spans 249 residues: 2,3-bisphosphoglycerate-dependent phosphoglycerate mutase (249 aa).

Substrate-binding positions include 9–16 (RHGQSQWN), 22–23 (TG), R61, 88–91 (ERHY), K99, 115–116 (RR), and 184–185 (GN). The active-site Tele-phosphohistidine intermediate is the H10. The Proton donor/acceptor role is filled by E88.

This sequence belongs to the phosphoglycerate mutase family. BPG-dependent PGAM subfamily. As to quaternary structure, homodimer.

It carries out the reaction (2R)-2-phosphoglycerate = (2R)-3-phosphoglycerate. It functions in the pathway carbohydrate degradation; glycolysis; pyruvate from D-glyceraldehyde 3-phosphate: step 3/5. In terms of biological role, catalyzes the interconversion of 2-phosphoglycerate and 3-phosphoglycerate. This chain is 2,3-bisphosphoglycerate-dependent phosphoglycerate mutase, found in Xanthomonas oryzae pv. oryzae (strain MAFF 311018).